The following is a 220-amino-acid chain: Photosynthetic NDH subunit of lumenal location 3, chloroplastic (220 aa).

Residues 1–35 constitute a chloroplast transit peptide; that stretch reads MAHFIDLNSLTNTLPSLPKLPESRKTGKSSGFACR. A thylakoid-targeting transit peptide spans 36–77; sequence RTEEFQEPDSVQITRRMTLGFAVSIGLTGILGENNVSLAQDN.

Belongs to the PsbQ family. As to quaternary structure, part of the chloroplast NDH complex, composed of a mixture of chloroplast and nucleus encoded subunits. Component of the NDH lumenal subcomplex, at least composed of PnsL1, PnsL2, PnsL3, PnsL4 and PnsL5.

Its subcellular location is the plastid. The protein localises to the chloroplast thylakoid membrane. Its function is as follows. NDH shuttles electrons from NAD(P)H:plastoquinone, via FMN and iron-sulfur (Fe-S) centers, to quinones in the photosynthetic chain and possibly in a chloroplast respiratory chain. The immediate electron acceptor for the enzyme in this species is believed to be plastoquinone. Couples the redox reaction to proton translocation, and thus conserves the redox energy in a proton gradient. Required for both formation and activity of the chloroplast NAD(P)H dehydrogenase (NDH) complex. The sequence is that of Photosynthetic NDH subunit of lumenal location 3, chloroplastic from Arabidopsis thaliana (Mouse-ear cress).